Consider the following 199-residue polypeptide: Recombination protein RecR (199 aa).

The C4-type zinc finger occupies 58 to 73 (CARCGNITSADLCDIC). The Toprim domain maps to 81–176 (GELCVVEDVA…QVTSLAQGVP (96 aa)).

Belongs to the RecR family.

Its function is as follows. May play a role in DNA repair. It seems to be involved in an RecBC-independent recombinational process of DNA repair. It may act with RecF and RecO. This is Recombination protein RecR from Cereibacter sphaeroides (strain ATCC 17025 / ATH 2.4.3) (Rhodobacter sphaeroides).